Consider the following 370-residue polypeptide: Queuine tRNA-ribosyltransferase (370 aa).

The active-site Proton acceptor is aspartate 89. Residues 89-93 (DSGGF), aspartate 143, glutamine 185, and glycine 212 contribute to the substrate site. Positions 243–249 (GVGKPED) are RNA binding. Aspartate 262 serves as the catalytic Nucleophile. The tract at residues 267-271 (TRNAR) is RNA binding; important for wobble base 34 recognition. Positions 300, 302, 305, and 331 each coordinate Zn(2+).

Belongs to the queuine tRNA-ribosyltransferase family. As to quaternary structure, homodimer. Within each dimer, one monomer is responsible for RNA recognition and catalysis, while the other monomer binds to the replacement base PreQ1. Requires Zn(2+) as cofactor.

The catalysed reaction is 7-aminomethyl-7-carbaguanine + guanosine(34) in tRNA = 7-aminomethyl-7-carbaguanosine(34) in tRNA + guanine. It participates in tRNA modification; tRNA-queuosine biosynthesis. Its function is as follows. Catalyzes the base-exchange of a guanine (G) residue with the queuine precursor 7-aminomethyl-7-deazaguanine (PreQ1) at position 34 (anticodon wobble position) in tRNAs with GU(N) anticodons (tRNA-Asp, -Asn, -His and -Tyr). Catalysis occurs through a double-displacement mechanism. The nucleophile active site attacks the C1' of nucleotide 34 to detach the guanine base from the RNA, forming a covalent enzyme-RNA intermediate. The proton acceptor active site deprotonates the incoming PreQ1, allowing a nucleophilic attack on the C1' of the ribose to form the product. After dissociation, two additional enzymatic reactions on the tRNA convert PreQ1 to queuine (Q), resulting in the hypermodified nucleoside queuosine (7-(((4,5-cis-dihydroxy-2-cyclopenten-1-yl)amino)methyl)-7-deazaguanosine). The sequence is that of Queuine tRNA-ribosyltransferase from Pseudoalteromonas atlantica (strain T6c / ATCC BAA-1087).